We begin with the raw amino-acid sequence, 888 residues long: MQTHEIRRRFLDHFVRAGHTEVPSASLILADPNLLFVNAGMVQFKPYFLGQEAPPYPRATSVQKCVRTGDIEEVGVTTRHNTFFQMAGNFSFGDYFKEGAITLAWELISKPQSEGGFGFDPERIWVTAYQDDPEAAEIWHRMAGIPKERIQFRDGKDNYWDMGVPGPGGPCSEIYFDRGPAYGKDGGPVADEDRYLEIWNLVFMQDVRGELSPKQGHPPIGSLPKKNIDTGMGIERVAMLLQGVDNVYETDLLRPIIGKAEELTGRRYGAEHASDVRFRVIADHARTAAMLISDGVNPGNDGRGYVLRRLLRRIVRSARLLGAEKPVMAEFMQVVSDLMSPSYPELATDFDRIRTVAVGEETAFLKTLTTGSTLFDNTAAAVKAKGGTKIAGADAFTLHDTYGFPIDLTLEMAAEAGLSVDEEGFRSLMAEQRRRAKEDAAARKHAHADLSIYKELVDRGATEFTGFDELTSEAHVLALIADGVRVPTATQGQDVEVILDRSPLYAESGGQIADRGSITASGLKLRVNDVQKIAKKLWVHKTTVEQGQITEGDVVLAQADPAWRRGATQGHSGTHMVHAALRQVLGPNAVQAGSLNKPGYLRFDFNWQGQLSEQQKADIEAVSNDAVGADFPVNTFVTDLPKAKQMGALALFGENYGDEVRVVEIGGPFSMELCGGTHVQHSSQIGPITLLGESSVGSGVRRVEAFVGLDSYKYLAKERALLAGVASSLKVPSEEVPARVEQLVERLKVAEKELERTKIAAVLSSAGKFVEEAERVGRVLLVAAAAPEGVAAGDLRTLATDIRGRFGSEPAVVVLLGNADGKVPFVVAVNKSAQEIGVKAGELVGSFGPSIAGRGGGKPEMAQGAGSDPSGIPAGLAAVRARVAEIAG.

Residues His571, His575, Cys674, and His678 each coordinate Zn(2+).

Belongs to the class-II aminoacyl-tRNA synthetase family. Zn(2+) is required as a cofactor.

It is found in the cytoplasm. It carries out the reaction tRNA(Ala) + L-alanine + ATP = L-alanyl-tRNA(Ala) + AMP + diphosphate. Functionally, catalyzes the attachment of alanine to tRNA(Ala) in a two-step reaction: alanine is first activated by ATP to form Ala-AMP and then transferred to the acceptor end of tRNA(Ala). Also edits incorrectly charged Ser-tRNA(Ala) and Gly-tRNA(Ala) via its editing domain. In Nocardia farcinica (strain IFM 10152), this protein is Alanine--tRNA ligase.